The sequence spans 593 residues: Gamma-humulene synthase (593 aa).

The segment covering 1-26 (MAQISESVSPSTDLKSTESSITSNRH) has biased composition (polar residues). The interval 1-34 (MAQISESVSPSTDLKSTESSITSNRHGNMWEDDR) is disordered. The Mg(2+) site is built by D343, D347, D488, and E496. Positions 343–347 (DDLYD) match the DDXXD motif motif.

It belongs to the terpene synthase family. Tpsd subfamily. Requires Mg(2+) as cofactor. The cofactor is K(+).

The protein localises to the cytoplasm. It carries out the reaction (2E,6E)-farnesyl diphosphate = gamma-humulene + diphosphate. The catalysed reaction is (2E,6E)-farnesyl diphosphate = sibirene + diphosphate. The enzyme catalyses (2E,6E)-farnesyl diphosphate = longifolene + diphosphate. It catalyses the reaction (2E,6E)-farnesyl diphosphate = beta-himachalene + diphosphate. It carries out the reaction (2E,6E)-farnesyl diphosphate = gamma-himachalene + diphosphate. The catalysed reaction is (2E,6E)-farnesyl diphosphate = alpha-himachalene + diphosphate. It functions in the pathway terpene metabolism; oleoresin biosynthesis. Involved in defensive oleoresin formation in conifers in response to insect attack or other injury. Involved in 52 sesquiterpene (C15) olefins biosynthesis. This is Gamma-humulene synthase (ag5) from Abies grandis (Grand fir).